The following is an 840-amino-acid chain: OTU domain-containing protein 7B (840 aa).

A disordered region spans residues 49 to 88 (AGNLSPPFSGGSTCPKTPEKGGSDREPTRPSRPILQRQDD). Over residues 65–77 (TPEKGGSDREPTR) the composition is skewed to basic and acidic residues. A Phosphoserine modification is found at serine 100. The interval 152–401 (ERDLIEQSML…AVDPGKGWEW (250 aa)) is TRAF-binding. The interval 167 to 440 (AGRLNWWVSM…VKWIPLSSDS (274 aa)) is catalytic. The OTU domain occupies 183-365 (LLPLATTGDG…QAHFSALVSM (183 aa)). A regulatory loop region spans residues 187 to 193 (ATTGDGN). Aspartate 191 is a catalytic residue. Catalysis depends on cysteine 194, which acts as the Nucleophile. Residue histidine 358 is the Proton acceptor of the active site. Positions 440–452 (SQAPLAQPESPTA) are enriched in polar residues. Disordered stretches follow at residues 440-592 (SQAP…YSQE) and 653-710 (IMNG…VHCQ). 2 stretches are compositionally biased toward basic and acidic residues: residues 456–471 (DEPR…DKES) and 488–500 (SKRD…KRAD). Residues serine 464, serine 467, and serine 471 each carry the phosphoserine modification. The Nuclear localization signal signature appears at 483–498 (RRKEKSKRDREKDKKR). Gly residues predominate over residues 531–541 (KPGGLGSGSGI). Threonine 730 carries the post-translational modification Phosphothreonine. Residues 793–828 (PPTQTKCKQPNCSFYGHPETNNLCSCCYREELRRRE) form an A20-type zinc finger. Cysteine 799, cysteine 804, cysteine 816, and cysteine 819 together coordinate Zn(2+).

It belongs to the peptidase C64 family. As to quaternary structure, interacts with TRAF6. Interacts with PARK7, leading to inhibit deubiquitinase activity. Interacts with EGFR, ITCH and NEDD4. Interacts with TRAF3. Interacts with ZAP70 in activated T cells, but not in resting T cells. Post-translationally, phosphorylated by EGFR.

Its subcellular location is the cytoplasm. It is found in the nucleus. It carries out the reaction Thiol-dependent hydrolysis of ester, thioester, amide, peptide and isopeptide bonds formed by the C-terminal Gly of ubiquitin (a 76-residue protein attached to proteins as an intracellular targeting signal).. With respect to regulation, deubiquitinase activity is inhibited following interaction with PARK7. In terms of biological role, negative regulator of the non-canonical NF-kappa-B pathway that acts by mediating deubiquitination of TRAF3, an inhibitor of the NF-kappa-B pathway, thereby acting as a negative regulator of B-cell responses. In response to non-canonical NF-kappa-B stimuli, deubiquitinates 'Lys-48'-linked polyubiquitin chains of TRAF3, preventing TRAF3 proteolysis and over-activation of non-canonical NF-kappa-B. Negatively regulates mucosal immunity against infections. Deubiquitinates ZAP70, and thereby regulates T cell receptor (TCR) signaling that leads to the activation of NF-kappa-B. Plays a role in T cell homeostasis and is required for normal T cell responses, including production of IFNG and IL2. Mediates deubiquitination of EGFR. Has deubiquitinating activity toward 'Lys-11', 'Lys-48' and 'Lys-63'-linked polyubiquitin chains. Has a much higher catalytic rate with 'Lys-11'-linked polyubiquitin chains (in vitro); however the physiological significance of these data are unsure. Hydrolyzes both linear and branched forms of polyubiquitin. Acts as a regulator of mTORC1 and mTORC2 assembly by mediating 'Lys-63'-linked deubiquitination of MLST8, thereby promoting assembly of the mTORC2 complex, while inibiting formation of the mTORC1 complex. The polypeptide is OTU domain-containing protein 7B (Otud7b) (Mus musculus (Mouse)).